Here is a 280-residue protein sequence, read N- to C-terminus: 4-deoxy-L-threo-5-hexosulose-uronate ketol-isomerase (280 aa).

Residues histidine 198, histidine 200, glutamate 205, and histidine 247 each coordinate Zn(2+).

This sequence belongs to the KduI family. Requires Zn(2+) as cofactor.

It localises to the cytoplasm. The catalysed reaction is 5-dehydro-4-deoxy-D-glucuronate = 3-deoxy-D-glycero-2,5-hexodiulosonate. Functionally, isomerase involved in ulvan degradation. Ulvan is the main polysaccharide component of the Ulvales (green seaweed) cell wall. It is composed of disaccharide building blocks comprising 3-sulfated rhamnose (Rha3S) linked to D-glucuronic acid (GlcA), L-iduronic acid (IduA), or D-xylose (Xyl). Catalyzes the isomerization of 5-dehydro-4-deoxy-D-glucuronate to 3-deoxy-D-glycero-2,5-hexodiulosonate. The chain is 4-deoxy-L-threo-5-hexosulose-uronate ketol-isomerase from Formosa agariphila (strain DSM 15362 / KCTC 12365 / LMG 23005 / KMM 3901 / M-2Alg 35-1).